The primary structure comprises 203 residues: Ribosomal RNA small subunit methyltransferase G (203 aa).

S-adenosyl-L-methionine contacts are provided by residues G73, L78, 124–125, and R139; that span reads VE.

It belongs to the methyltransferase superfamily. RNA methyltransferase RsmG family.

The protein localises to the cytoplasm. It catalyses the reaction guanosine(527) in 16S rRNA + S-adenosyl-L-methionine = N(7)-methylguanosine(527) in 16S rRNA + S-adenosyl-L-homocysteine. Specifically methylates the N7 position of guanine in position 527 of 16S rRNA. The protein is Ribosomal RNA small subunit methyltransferase G of Haemophilus influenzae (strain PittEE).